Reading from the N-terminus, the 358-residue chain is DNA polymerase IV (358 aa).

Positions 4–185 (IIHIDMDCYF…LPLIKIPGVG (182 aa)) constitute a UmuC domain. Mg(2+) contacts are provided by D8 and D103. E104 is an active-site residue.

The protein belongs to the DNA polymerase type-Y family. As to quaternary structure, monomer. Mg(2+) serves as cofactor.

Its subcellular location is the cytoplasm. The catalysed reaction is DNA(n) + a 2'-deoxyribonucleoside 5'-triphosphate = DNA(n+1) + diphosphate. Poorly processive, error-prone DNA polymerase involved in untargeted mutagenesis. Copies undamaged DNA at stalled replication forks, which arise in vivo from mismatched or misaligned primer ends. These misaligned primers can be extended by PolIV. Exhibits no 3'-5' exonuclease (proofreading) activity. May be involved in translesional synthesis, in conjunction with the beta clamp from PolIII. In Shewanella denitrificans (strain OS217 / ATCC BAA-1090 / DSM 15013), this protein is DNA polymerase IV.